The sequence spans 63 residues: Large ribosomal subunit protein uL29 (63 aa).

This sequence belongs to the universal ribosomal protein uL29 family.

This Pseudoalteromonas atlantica (strain T6c / ATCC BAA-1087) protein is Large ribosomal subunit protein uL29.